The primary structure comprises 280 residues: Diaminopimelate epimerase (280 aa).

2 residues coordinate substrate: Asn-14 and Asn-67. Cys-76 (proton donor) is an active-site residue. Substrate-binding positions include 77-78, Asn-193, and 210-211; these read GN and ER. The active-site Proton acceptor is the Cys-220. 221 to 222 is a substrate binding site; it reads GT.

This sequence belongs to the diaminopimelate epimerase family. Homodimer.

The protein resides in the cytoplasm. The catalysed reaction is (2S,6S)-2,6-diaminopimelate = meso-2,6-diaminopimelate. The protein operates within amino-acid biosynthesis; L-lysine biosynthesis via DAP pathway; DL-2,6-diaminopimelate from LL-2,6-diaminopimelate: step 1/1. Its function is as follows. Catalyzes the stereoinversion of LL-2,6-diaminopimelate (L,L-DAP) to meso-diaminopimelate (meso-DAP), a precursor of L-lysine. The polypeptide is Diaminopimelate epimerase (Methanocella arvoryzae (strain DSM 22066 / NBRC 105507 / MRE50)).